We begin with the raw amino-acid sequence, 127 residues long: Large ribosomal subunit protein uL24A (127 aa).

Belongs to the universal ribosomal protein uL24 family. Component of the large ribosomal subunit (LSU). Mature yeast ribosomes consist of a small (40S) and a large (60S) subunit. The 40S small subunit contains 1 molecule of ribosomal RNA (18S rRNA) and 33 different proteins (encoded by 57 genes). The large 60S subunit contains 3 rRNA molecules (25S, 5.8S and 5S rRNA) and 46 different proteins (encoded by 81 genes).

It is found in the cytoplasm. Its function is as follows. Component of the ribosome, a large ribonucleoprotein complex responsible for the synthesis of proteins in the cell. The small ribosomal subunit (SSU) binds messenger RNAs (mRNAs) and translates the encoded message by selecting cognate aminoacyl-transfer RNA (tRNA) molecules. The large subunit (LSU) contains the ribosomal catalytic site termed the peptidyl transferase center (PTC), which catalyzes the formation of peptide bonds, thereby polymerizing the amino acids delivered by tRNAs into a polypeptide chain. The nascent polypeptides leave the ribosome through a tunnel in the LSU and interact with protein factors that function in enzymatic processing, targeting, and the membrane insertion of nascent chains at the exit of the ribosomal tunnel. The protein is Large ribosomal subunit protein uL24A of Saccharomyces cerevisiae (strain ATCC 204508 / S288c) (Baker's yeast).